Consider the following 356-residue polypeptide: MVDAGTLEKLEAGFQKLQAATDCKSLVKKYLTREVFDQLKTLKTSLGATLLDVIQSGVENLDSGVGIYAPDAESYTLFAPLFDPIIEDYHIGFTKNDSHPPSDFGDVNTLGDLDPDNKFVISTRVRCGRSLQGYPFNPCLTEAQYKEMEDKVSSTLNGLDGELKGTFYPLTGMAKEVQQQLIDDHFLFKEGDRFLQAANACRYWPTGRGIYHNDAKTFLVWCNEEDHLRIISMQKGGDLKAVYARLVNAVNEIEKRIPFSHHDRLGYLTFCPTNLGTTIRASVHIQLPKLAADRKRLEEVASKYNLQVRGTRGEHTEAEGGIYDISNKRRMGLTEYQAVKEMYDGIAELIKLEQSA.

The Phosphagen kinase N-terminal domain maps to 9-91 (KLEAGFQKLQ…FDPIIEDYHI (83 aa)). Position 64–68 (64–68 (GVGIY)) interacts with L-arginine. In terms of domain architecture, Phosphagen kinase C-terminal spans 119–356 (FVISTRVRCG…AELIKLEQSA (238 aa)). ATP-binding positions include 122-126 (STRVR) and His185. Glu225 is an L-arginine binding site. Arg229 provides a ligand contact to ATP. Residue Cys271 participates in L-arginine binding. ATP contacts are provided by residues 280-284 (RASVH) and 309-314 (RGTRGE). Glu314 provides a ligand contact to L-arginine.

It belongs to the ATP:guanido phosphotransferase family.

It catalyses the reaction L-arginine + ATP = N(omega)-phospho-L-arginine + ADP + H(+). The protein is Arginine kinase (ARGK) of Artemia franciscana (Brine shrimp).